Reading from the N-terminus, the 450-residue chain is Phosphoglucosamine mutase (450 aa).

Ser103 acts as the Phosphoserine intermediate in catalysis. 4 residues coordinate Mg(2+): Ser103, Asp243, Asp245, and Asp247. The residue at position 103 (Ser103) is a Phosphoserine.

The protein belongs to the phosphohexose mutase family. Mg(2+) serves as cofactor. Post-translationally, activated by phosphorylation.

It catalyses the reaction alpha-D-glucosamine 1-phosphate = D-glucosamine 6-phosphate. In terms of biological role, catalyzes the conversion of glucosamine-6-phosphate to glucosamine-1-phosphate. This chain is Phosphoglucosamine mutase, found in Latilactobacillus sakei subsp. sakei (strain 23K) (Lactobacillus sakei subsp. sakei).